A 228-amino-acid chain; its full sequence is Phosphoenolpyruvate guanylyltransferase (228 aa).

Phosphoenolpyruvate is bound by residues Thr148, Gly164, and Ser167.

Belongs to the CofC family.

The catalysed reaction is phosphoenolpyruvate + GTP + H(+) = enolpyruvoyl-2-diphospho-5'-guanosine + diphosphate. The protein operates within cofactor biosynthesis; coenzyme F420 biosynthesis. Guanylyltransferase that catalyzes the activation of phosphoenolpyruvate (PEP) as enolpyruvoyl-2-diphospho-5'-guanosine, via the condensation of PEP with GTP. It is involved in the biosynthesis of coenzyme F420, a hydride carrier cofactor. The polypeptide is Phosphoenolpyruvate guanylyltransferase (Thermomonospora curvata (strain ATCC 19995 / DSM 43183 / JCM 3096 / KCTC 9072 / NBRC 15933 / NCIMB 10081 / Henssen B9)).